A 205-amino-acid chain; its full sequence is MANLEIIDQKGKSAGNVDLNEEIFGIEPNESVVFDAIIRQRAGKRQGTSAVKNRSAVRGGGKKPWRQKGTGRARQGSIRAPQWRGGGTVFGPTPRSYKMDMPRKARRLAMKSVLSQKVADNDLIILDQLTLEAPKTKELKAILDNANVSGKVLVVSDDKNVQLSGKNLPKVKVVPVNGLNVVDAVDYQKLVLTQDAIKRIEEVLA.

The disordered stretch occupies residues 45–97 (RQGTSAVKNRSAVRGGGKKPWRQKGTGRARQGSIRAPQWRGGGTVFGPTPRSY). The segment covering 60–71 (GGKKPWRQKGTG) has biased composition (basic residues).

This sequence belongs to the universal ribosomal protein uL4 family. In terms of assembly, part of the 50S ribosomal subunit.

In terms of biological role, one of the primary rRNA binding proteins, this protein initially binds near the 5'-end of the 23S rRNA. It is important during the early stages of 50S assembly. It makes multiple contacts with different domains of the 23S rRNA in the assembled 50S subunit and ribosome. Its function is as follows. Forms part of the polypeptide exit tunnel. This is Large ribosomal subunit protein uL4 from Lactobacillus johnsonii (strain CNCM I-12250 / La1 / NCC 533).